The primary structure comprises 205 residues: High frequency lysogenization protein HflD homolog (205 aa).

This sequence belongs to the HflD family.

Its subcellular location is the cytoplasm. It localises to the cell inner membrane. The protein is High frequency lysogenization protein HflD homolog of Haemophilus influenzae (strain 86-028NP).